The primary structure comprises 465 residues: Sensor histidine kinase ZraS (465 aa).

Residues 1–14 (MSFIRLHKDAAATW) lie on the Cytoplasmic side of the membrane. The helical transmembrane segment at 15–35 (LSRLLPAAIFILVGLFSIMVI) threads the bilayer. The Periplasmic portion of the chain corresponds to 36-202 (RDYGRESAAA…AATQAREWRN (167 aa)). The chain crosses the membrane as a helical span at residues 203-223 (TLIVLSALAAVLLATLLAFFW). Over 224 to 465 (HQRYQRSHRE…WLPVIARQQD (242 aa)) the chain is Cytoplasmic. The 209-residue stretch at 253–461 (GVAHEIRNPL…VFTIWLPVIA (209 aa)) folds into the Histidine kinase domain. The residue at position 256 (histidine 256) is a Phosphohistidine; by autocatalysis.

Post-translationally, autophosphorylated.

It is found in the cell inner membrane. The catalysed reaction is ATP + protein L-histidine = ADP + protein N-phospho-L-histidine.. Activity of the ZraS/ZraR two-component system is repressed by the zinc-bound form of ZraP, which probably interacts with the periplasmic region of ZraS. Part of the Zra signaling pathway, an envelope stress response (ESR) system composed of the periplasmic accessory protein ZraP, the histidine kinase ZraS and the transcriptional regulator ZraR. The ZraPSR system contributes to antibiotic resistance and is important for membrane integrity in the presence of membrane-targeting biocides. ZraS is a member of the two-component regulatory system ZraS/ZraR. Functions as a membrane-associated sensor kinase that phosphorylates ZraR in response to high concentrations of Zn(2+) or Pb(2+) in the medium. In Salmonella typhimurium (strain LT2 / SGSC1412 / ATCC 700720), this protein is Sensor histidine kinase ZraS.